The chain runs to 281 residues: 2-dehydro-3-deoxyphosphooctonate aldolase (281 aa).

This sequence belongs to the KdsA family.

It localises to the cytoplasm. It carries out the reaction D-arabinose 5-phosphate + phosphoenolpyruvate + H2O = 3-deoxy-alpha-D-manno-2-octulosonate-8-phosphate + phosphate. The protein operates within carbohydrate biosynthesis; 3-deoxy-D-manno-octulosonate biosynthesis; 3-deoxy-D-manno-octulosonate from D-ribulose 5-phosphate: step 2/3. It functions in the pathway bacterial outer membrane biogenesis; lipopolysaccharide biosynthesis. The protein is 2-dehydro-3-deoxyphosphooctonate aldolase of Stutzerimonas stutzeri (strain A1501) (Pseudomonas stutzeri).